The following is a 349-amino-acid chain: tRNA uridine(34) hydroxylase (349 aa).

One can recognise a Rhodanese domain in the interval 146-240 (DDPDAVFIDM…YARRAREQGL (95 aa)). The active-site Cysteine persulfide intermediate is C200. Residues 316 to 328 (EEQRRRRAGRENG) are compositionally biased toward basic and acidic residues. A disordered region spans residues 316–349 (EEQRRRRAGRENGNKIFNKSRGRLNTKLGIPDPE).

This sequence belongs to the TrhO family.

It catalyses the reaction uridine(34) in tRNA + AH2 + O2 = 5-hydroxyuridine(34) in tRNA + A + H2O. Its function is as follows. Catalyzes oxygen-dependent 5-hydroxyuridine (ho5U) modification at position 34 in tRNAs. The sequence is that of tRNA uridine(34) hydroxylase from Enterobacter sp. (strain 638).